Consider the following 310-residue polypeptide: MRTHDDTWDIKTSVGATAVMVAAARAVETDRPDPLIRDPYARLLVTNAGAGAIWEAMLDPTLVAKAAAIDAETAAIVAYLRSYQAVRTNFFDTYFASAVAAGIRQVVILASGLDSRAYRLDWPAGTIVYEIDQPKVLSYKSTTLAENGVTPSAGRREVPADLRQDWPAALRDAGFDPTARTAWLAEGLLMYLPAEAQDRLFTQVGAVSVAGSRIAAETAPVHGEERRAEMRARFKKVADVLGIEQTIDVQELVYHDQDRASVADWLTDHGWRARSQRAPDEMRRVGRWVEGVPMADDPTAFAEFVTAERL.

S-adenosyl-L-methionine-binding positions include aspartate 132 and 161–162; that span reads DL.

This sequence belongs to the UPF0677 family.

Functionally, exhibits S-adenosyl-L-methionine-dependent methyltransferase activity. This Mycobacterium bovis (strain ATCC BAA-935 / AF2122/97) protein is Putative S-adenosyl-L-methionine-dependent methyltransferase Mb0151.